Here is a 253-residue protein sequence, read N- to C-terminus: MGTILDKIVDQKKKEVAALYETYTPVKEKRKTRSLVKALEQFTVIAEVKRASPSKGDINLHVDVRKQVKTYEECGAGAVSVLTDGQFFKGSFYDLQTAREESSIPLLCKDFIIDKIQIDRAYEAGADIILLIVAALTKEKLKELYSYVLEKGLEAIVEVHDEQELEIAIQLNPHVIGINNRNLKTFEVDLSQTEKLGKRLNEEKLLWISESGVHSKEDMIRVKRAGAKGVLVGEALMTSSSIHTFFEDCKVNI.

It belongs to the TrpC family.

It catalyses the reaction 1-(2-carboxyphenylamino)-1-deoxy-D-ribulose 5-phosphate + H(+) = (1S,2R)-1-C-(indol-3-yl)glycerol 3-phosphate + CO2 + H2O. It functions in the pathway amino-acid biosynthesis; L-tryptophan biosynthesis; L-tryptophan from chorismate: step 4/5. The chain is Indole-3-glycerol phosphate synthase from Bacillus cereus (strain ZK / E33L).